We begin with the raw amino-acid sequence, 35 residues long: uncharacterized protein (35 aa).

An N-terminal signal peptide occupies residues 1–18; it reads MRSLVFVQLSLLSWEIFC.

This is an uncharacterized protein from Saccharomyces cerevisiae (strain ATCC 204508 / S288c) (Baker's yeast).